Here is a 265-residue protein sequence, read N- to C-terminus: Apolipoprotein A-I (265 aa).

The N-terminal stretch at 1–20 (METKAVVLTLAVLFLTGSQA) is a signal peptide. Repeat copies occupy residues 69–90 (LKIL…EQMR) and 91–112 (PIFQ…EVLN). Residues 69–265 (LKILDNWDTL…DEATKKLNSQ (197 aa)) form a 10 X approximate tandem repeats region. Residues 113–123 (KDLEELKQKVQ) form a 3; half-length repeat. 5 repeat units span residues 124–145 (PYLD…QKMA), 146–167 (PLGT…EKLG), 168–189 (PLGE…TQLA), 190–209 (PYTE…LKES), and 210–230 (NLAE…ENAK). Met-195 carries the methionine sulfoxide modification. Residues 231–241 (PALEDFRQGLM) form a 9; half-length repeat. Met-241 is subject to Methionine sulfoxide. Repeat 10 spans residues 242–265 (PVLEGFQKSVLAALDEATKKLNSQ).

The protein belongs to the apolipoprotein A1/A4/E family. In terms of assembly, homodimer. Interacts with APOA1BP and CLU. Component of a sperm activating protein complex (SPAP), consisting of APOA1, an immunoglobulin heavy chain, an immunoglobulin light chain and albumin. Interacts with NDRG1. Interacts with SCGB3A2. Interacts with NAXE and YJEFN3. Glycosylated. Post-translationally, palmitoylated. In terms of processing, phosphorylation sites are present in the extracellular medium. As to expression, major protein of plasma HDL, also found in chylomicrons.

It is found in the secreted. Participates in the reverse transport of cholesterol from tissues to the liver for excretion by promoting cholesterol efflux from tissues and by acting as a cofactor for the lecithin cholesterol acyltransferase (LCAT). As part of the SPAP complex, activates spermatozoa motility. The chain is Apolipoprotein A-I (APOA1) from Orycteropus afer (Aardvark).